The primary structure comprises 261 residues: Homeobox protein ceh-33 (261 aa).

A DNA-binding region (homeobox) is located at residues 133–192 (GEETSYCFRDKSRVLLRDWYCRNSYPSPREKRELAEKTHLTVTQVSNWFKNRRQRDRAGV).

It belongs to the SIX/Sine oculis homeobox family.

It is found in the nucleus. The chain is Homeobox protein ceh-33 (ceh-33) from Caenorhabditis elegans.